The primary structure comprises 327 residues: Peroxidase 21 (327 aa).

Residues 1–28 form the signal peptide; sequence MANAKPFCLLGFFCLLLQLFSIFHIGNG. 4 disulfide bridges follow: Cys39/Cys118, Cys72/Cys77, Cys124/Cys323, and Cys204/Cys231. His70 serves as the catalytic Proton acceptor. Ca(2+) contacts are provided by Asp71, Val74, Asp78, and Ser80. Residue Pro167 participates in substrate binding. Residue Asn170 is glycosylated (N-linked (GlcNAc...) asparagine). Heme b is bound at residue His197. Ser198 lines the Ca(2+) pocket. Ca(2+) is bound by residues Asp247, Thr250, and Asp255.

The protein belongs to the peroxidase family. Classical plant (class III) peroxidase subfamily. Heme b is required as a cofactor. It depends on Ca(2+) as a cofactor. Preferentially expressed in roots and leaves, slightly in stems.

The catalysed reaction is 2 a phenolic donor + H2O2 = 2 a phenolic radical donor + 2 H2O. Removal of H(2)O(2), oxidation of toxic reductants, biosynthesis and degradation of lignin, suberization, auxin catabolism, response to environmental stresses such as wounding, pathogen attack and oxidative stress. These functions might be dependent on each isozyme/isoform in each plant tissue. In terms of biological role, might function as heat shock-like defense protein. May be implicated in the systemic acquired resistance response. This is Peroxidase 21 (PER21) from Arabidopsis thaliana (Mouse-ear cress).